The chain runs to 79 residues: Dolichyl-diphosphooligosaccharide--protein glycosyltransferase subunit TMEM258 (79 aa).

2 helical membrane-spanning segments follow: residues 18-38 and 55-75; these read LPLL…AFTM and FIAA…LLWV.

This sequence belongs to the OST5 family. In terms of assembly, component of the oligosaccharyltransferase (OST) complex.

It is found in the membrane. It participates in protein modification; protein glycosylation. Its function is as follows. Subunit of the oligosaccharyl transferase (OST) complex that catalyzes the initial transfer of a defined glycan (Glc(3)Man(9)GlcNAc(2) in eukaryotes) from the lipid carrier dolichol-pyrophosphate to an asparagine residue within an Asn-X-Ser/Thr consensus motif in nascent polypeptide chains, the first step in protein N-glycosylation. N-glycosylation occurs cotranslationally and the complex associates with the Sec61 complex at the channel-forming translocon complex that mediates protein translocation across the endoplasmic reticulum (ER). All subunits are required for a maximal enzyme activity. This chain is Dolichyl-diphosphooligosaccharide--protein glycosyltransferase subunit TMEM258, found in Caenorhabditis briggsae.